The sequence spans 470 residues: MSVKVRDSLSGGLVEVGGDGRVGIYVCGPTVYNHIHIGNVRGHLFWDVAVRFLRSRGYRVKFVWNITDIDDKIINRANEEGVSWKEIVRRYTDSFHERLRLLGIGMPDVEPRATEHIPEMISLIEELIRRGHAYPAPNGDVYYAVETFPRYGALSKQRPEEMKITEKGQTGHKRNPLDFTLWKASKPGEPSWESPWGPGRPGWHIECSAMVEKHLPGGADIHGGGSDIRFPHHENELAQSCGAHPDRPFVRAWAHHGMVRMAAQKMAKSVGNVVDAREATLKHGRDAIRMWLLQSHYSQPIDYSDEILEEKRRSCERLLRLYREISRSEASSPLSDRLAGELRERFDAAMREDFNTPEAIAALFDAASGAGREISSRPSAAGEFASLKEALQELLGLLGFDVAGERVSEVDGVRIRHAGEAPGEVLERVARRERARRRREWPEADRLREELLREGWAIEDTAAGPVLSRR.

Residue C27 coordinates Zn(2+). The short motif at 29 to 39 is the 'HIGH' region element; sequence PTVYNHIHIGN. 3 residues coordinate Zn(2+): C207, H232, and E236. The short motif at 265–269 is the 'KMSKS' region element; it reads KMAKS. Residue K268 participates in ATP binding.

Belongs to the class-I aminoacyl-tRNA synthetase family. As to quaternary structure, monomer. Zn(2+) is required as a cofactor.

The protein localises to the cytoplasm. The catalysed reaction is tRNA(Cys) + L-cysteine + ATP = L-cysteinyl-tRNA(Cys) + AMP + diphosphate. The sequence is that of Cysteine--tRNA ligase from Rubrobacter xylanophilus (strain DSM 9941 / JCM 11954 / NBRC 16129 / PRD-1).